The following is a 206-amino-acid chain: Small ribosomal subunit protein uS4c (206 aa).

2 stretches are compositionally biased toward basic residues: residues 1-13 and 25-34; these read MSRY…RITR and QSKKKGRPGQ. Positions 1-50 are disordered; the sequence is MSRYRGPKLRITRRLGALPGLTQKQSKKKGRPGQHGKSNEADNSKKTTEY. A compositionally biased stretch (basic and acidic residues) spans 37 to 50; that stretch reads KSNEADNSKKTTEY. An S4 RNA-binding domain is found at 95–157; sequence MRLDTICFTL…ATSKNLVEGN (63 aa).

This sequence belongs to the universal ribosomal protein uS4 family. In terms of assembly, part of the 30S ribosomal subunit. Contacts protein S5. The interaction surface between S4 and S5 is involved in control of translational fidelity.

The protein resides in the plastid. It is found in the chloroplast. Its function is as follows. One of the primary rRNA binding proteins, it binds directly to 16S rRNA where it nucleates assembly of the body of the 30S subunit. In terms of biological role, with S5 and S12 plays an important role in translational accuracy. This Trieres chinensis (Marine centric diatom) protein is Small ribosomal subunit protein uS4c (rps4).